The chain runs to 488 residues: Glutamate--tRNA ligase (488 aa).

Positions 9 to 19 (PSPTGFLHIGG) match the 'HIGH' region motif. Positions 112, 114, 139, and 141 each coordinate Zn(2+). The 'KMSKS' region signature appears at 256-260 (KLSKR). ATP is bound at residue lysine 259.

Belongs to the class-I aminoacyl-tRNA synthetase family. Glutamate--tRNA ligase type 1 subfamily. In terms of assembly, monomer. Requires Zn(2+) as cofactor.

The protein resides in the cytoplasm. It carries out the reaction tRNA(Glu) + L-glutamate + ATP = L-glutamyl-tRNA(Glu) + AMP + diphosphate. Functionally, catalyzes the attachment of glutamate to tRNA(Glu) in a two-step reaction: glutamate is first activated by ATP to form Glu-AMP and then transferred to the acceptor end of tRNA(Glu). The polypeptide is Glutamate--tRNA ligase (Elusimicrobium minutum (strain Pei191)).